Consider the following 188-residue polypeptide: Elongation factor P (188 aa).

The protein belongs to the elongation factor P family.

Its subcellular location is the cytoplasm. Its pathway is protein biosynthesis; polypeptide chain elongation. Its function is as follows. Involved in peptide bond synthesis. Stimulates efficient translation and peptide-bond synthesis on native or reconstituted 70S ribosomes in vitro. Probably functions indirectly by altering the affinity of the ribosome for aminoacyl-tRNA, thus increasing their reactivity as acceptors for peptidyl transferase. The chain is Elongation factor P from Rickettsia rickettsii (strain Iowa).